Here is a 471-residue protein sequence, read N- to C-terminus: Meiosis-specific with OB domain-containing protein (471 aa).

Residues 167-272 (IINVLAAVKS…EANILLNFIR (106 aa)) constitute a DNA-binding region (OB).

It belongs to the MEIOB family. Component of a multiprotein complex with RPA2 and SPATA22. Interacts with SPATA22. Interacts with the complex BRME1:HSF2BP:BRCA2.

Its subcellular location is the cytoplasm. It is found in the nucleus. It localises to the chromosome. Its function is as follows. Single-stranded DNA-binding protein required for homologous recombination in meiosis I. Required for double strand breaks (DSBs) repair and crossover formation and promotion of faithful and complete synapsis. Not required for the initial loading of recombinases but required to maintain a proper number of RAD51 and DMC1 foci after the zygotene stage. May act by ensuring the stabilization of recombinases, which is required for successful homology search and meiotic recombination. Displays Single-stranded DNA 3'-5' exonuclease activity in vitro. This Macaca fascicularis (Crab-eating macaque) protein is Meiosis-specific with OB domain-containing protein (MEIOB).